We begin with the raw amino-acid sequence, 347 residues long: N-acetyl-gamma-glutamyl-phosphate reductase (347 aa).

The active site involves C152.

The protein belongs to the NAGSA dehydrogenase family. Type 1 subfamily.

The protein localises to the cytoplasm. It carries out the reaction N-acetyl-L-glutamate 5-semialdehyde + phosphate + NADP(+) = N-acetyl-L-glutamyl 5-phosphate + NADPH + H(+). It functions in the pathway amino-acid biosynthesis; L-arginine biosynthesis; N(2)-acetyl-L-ornithine from L-glutamate: step 3/4. In terms of biological role, catalyzes the NADPH-dependent reduction of N-acetyl-5-glutamyl phosphate to yield N-acetyl-L-glutamate 5-semialdehyde. This is N-acetyl-gamma-glutamyl-phosphate reductase from Ehrlichia ruminantium (strain Gardel).